The primary structure comprises 505 residues: Probable malate:quinone oxidoreductase (505 aa).

It belongs to the MQO family. FAD serves as cofactor.

The catalysed reaction is (S)-malate + a quinone = a quinol + oxaloacetate. It functions in the pathway carbohydrate metabolism; tricarboxylic acid cycle; oxaloacetate from (S)-malate (quinone route): step 1/1. This is Probable malate:quinone oxidoreductase from Pseudomonas fluorescens.